The sequence spans 259 residues: Probable ABC transporter permease protein RF_0080 (259 aa).

The next 5 membrane-spanning stretches (helical) occupy residues 13–35 (TIKF…SSII), 49–69 (LFIG…SGAV), 148–168 (VIAA…IGVM), 195–215 (PIDV…ISII), and 237–257 (AVVN…ELFF).

The protein belongs to the MlaE permease family.

Its subcellular location is the cell inner membrane. In terms of biological role, could be part of an ABC transporter complex. The protein is Probable ABC transporter permease protein RF_0080 of Rickettsia felis (strain ATCC VR-1525 / URRWXCal2) (Rickettsia azadi).